The sequence spans 249 residues: Small ribosomal subunit protein uS2 (249 aa).

The protein belongs to the universal ribosomal protein uS2 family.

The chain is Small ribosomal subunit protein uS2 from Polynucleobacter necessarius subsp. necessarius (strain STIR1).